Here is a 240-residue protein sequence, read N- to C-terminus: MNKNVVIKSLATLTILTSVAGIGTTLVEEVQQTAKAENNVTKIKDTNIFPYTGVVAFNSATGFVVGKNTILTNKHVSKNYKVGDRITAHPNSDKSNGGIYSIKKIINYPGKEDVSVIKVEEHAIERGPKGFNFNDNVTPFKYAAGAKAGDRIKVIGYPHPYKNKYVLHESTGPVMSVEGSSIVYSAHTESGNSGSPVLNSNNELVGIHFASDVKNDDNRNAYGVYFTPEIKRFIAENIDK.

The signal sequence occupies residues 1–36 (MNKNVVIKSLATLTILTSVAGIGTTLVEEVQQTAKA). Catalysis depends on charge relay system residues H75, D113, and S193.

This sequence belongs to the peptidase S1B family.

The protein resides in the secreted. Functionally, serine protease that cleaves specifically after the sequence Trp-Glu-Leu-Gln. In Staphylococcus aureus (strain bovine RF122 / ET3-1), this protein is Serine protease SplB (splB).